Reading from the N-terminus, the 484-residue chain is tRNA-2-methylthio-N(6)-dimethylallyladenosine synthase (484 aa).

Residues 36–153 (GKLYIKTHGC…LPELIRARRE (118 aa)) enclose the MTTase N-terminal domain. [4Fe-4S] cluster-binding residues include Cys-45, Cys-82, Cys-116, Cys-190, Cys-194, and Cys-197. Residues 176 to 415 (RAEGPSAFVS…HINAHAASIS (240 aa)) form the Radical SAM core domain. One can recognise a TRAM domain in the interval 416 to 479 (QSMVGSVQRV…SNSLRGRIQL (64 aa)). The interval 428–450 (EGPSRRDPNELTGKSENMRPVNF) is disordered.

The protein belongs to the methylthiotransferase family. MiaB subfamily. As to quaternary structure, monomer. It depends on [4Fe-4S] cluster as a cofactor.

It localises to the cytoplasm. It catalyses the reaction N(6)-dimethylallyladenosine(37) in tRNA + (sulfur carrier)-SH + AH2 + 2 S-adenosyl-L-methionine = 2-methylsulfanyl-N(6)-dimethylallyladenosine(37) in tRNA + (sulfur carrier)-H + 5'-deoxyadenosine + L-methionine + A + S-adenosyl-L-homocysteine + 2 H(+). In terms of biological role, catalyzes the methylthiolation of N6-(dimethylallyl)adenosine (i(6)A), leading to the formation of 2-methylthio-N6-(dimethylallyl)adenosine (ms(2)i(6)A) at position 37 in tRNAs that read codons beginning with uridine. The sequence is that of tRNA-2-methylthio-N(6)-dimethylallyladenosine synthase from Xanthomonas axonopodis pv. citri (strain 306).